Consider the following 271-residue polypeptide: Chorismate dehydratase (271 aa).

It belongs to the MqnA/MqnD family. MqnA subfamily.

It carries out the reaction chorismate = 3-[(1-carboxyvinyl)-oxy]benzoate + H2O. It participates in quinol/quinone metabolism; menaquinone biosynthesis. Its function is as follows. Catalyzes the dehydration of chorismate into 3-[(1-carboxyvinyl)oxy]benzoate, a step in the biosynthesis of menaquinone (MK, vitamin K2). The polypeptide is Chorismate dehydratase (Thermus thermophilus (strain ATCC 27634 / DSM 579 / HB8)).